Consider the following 836-residue polypeptide: General vesicular transport factor p115 (836 aa).

The tract at residues 1–22 is disordered; sequence MEFLKSGIKTVLGSTEPGQQPS. The span at 12-22 shows a compositional bias: polar residues; that stretch reads LGSTEPGQQPS. ARM repeat units follow at residues 24-64, 65-124, 126-166, 169-210, 211-256, 316-359, 368-413, 424-463, 477-518, 523-577, and 579-636; these read AETV…VGAQ, GMPP…IKTP, HVTL…LILV, MGVS…VAFE, NAFD…FKEG, RLLH…LGRV, PAIV…QTLL, STGQLLCTGLFSTDALANWFSAVALMHSLVENVALKEELL, TLLE…KALL, TMAY…IIKR, and GQES…LVSG. 2 coiled-coil regions span residues 663–707 and 744–806; these read IIRG…DQNT and NMYF…EEAG. A disordered region spans residues 803–836; that stretch reads EEAGSTNTLPTSNVAPSVPAAGGGSPIPSGTASR. Residues 806–816 are compositionally biased toward polar residues; it reads GSTNTLPTSNV. Low complexity predominate over residues 817-836; the sequence is APSVPAAGGGSPIPSGTASR.

The protein belongs to the VDP/USO1/EDE1 family.

It localises to the cytoplasm. The protein resides in the golgi apparatus. Its subcellular location is the golgi stack. The protein localises to the golgi stack membrane. It is found in the endoplasmic reticulum. It localises to the endoplasmic reticulum membrane. In terms of biological role, essential for maintaining the architecture of the Golgi stacks and for normal organization of the transitional endoplasmic reticulum (tER). Required for both the formation of the Golgi stacks and the maintenance of the individual cisternae. The protein is General vesicular transport factor p115 of Drosophila melanogaster (Fruit fly).